Here is a 511-residue protein sequence, read N- to C-terminus: Maturase K (511 aa).

This sequence belongs to the intron maturase 2 family. MatK subfamily.

It localises to the plastid. The protein resides in the chloroplast. Its function is as follows. Usually encoded in the trnK tRNA gene intron. Probably assists in splicing its own and other chloroplast group II introns. In Hordeum bulbosum (Bulbous barley), this protein is Maturase K.